We begin with the raw amino-acid sequence, 574 residues long: Calcium-dependent protein kinase 9 (574 aa).

Residues 1–64 (MGNTCCVAPA…RARAKPNPYD (64 aa)) form a disordered region. Glycine 2 is lipidated: N-myristoyl glycine. The span at 28 to 40 (KSPAPSATTTTAT) shows a compositional bias: low complexity. The 259-residue stretch at 101-359 (YQLGRELGRG…AQQVLDHPWL (259 aa)) folds into the Protein kinase domain. ATP contacts are provided by residues 107 to 115 (LGRGEFGVT) and lysine 130. Aspartate 225 serves as the catalytic Proton acceptor. The autoinhibitory domain stretch occupies residues 365-395 (APNVPLGDVVRARLKQFSLMNRLKKKAMRVI). EF-hand domains lie at 402–437 (EEVE…VGSK), 438–473 (LAEP…LQRL), 474–509 (SNDN…DSGH), and 510–545 (ADDA…GTDW). Ca(2+) contacts are provided by aspartate 415, aspartate 417, asparagine 419, arginine 421, glutamate 426, aspartate 451, aspartate 453, asparagine 455, tyrosine 457, glutamate 462, aspartate 487, aspartate 489, serine 491, tyrosine 493, glutamate 498, aspartate 523, aspartate 525, aspartate 527, arginine 529, and glutamate 534.

Belongs to the protein kinase superfamily. Ser/Thr protein kinase family. CDPK subfamily. In terms of tissue distribution, expressed in leaf blades and stems. Expressed at low levels in anthers and spikelets.

The protein resides in the membrane. The catalysed reaction is L-seryl-[protein] + ATP = O-phospho-L-seryl-[protein] + ADP + H(+). It catalyses the reaction L-threonyl-[protein] + ATP = O-phospho-L-threonyl-[protein] + ADP + H(+). Activated by calcium. Autophosphorylation may play an important role in the regulation of the kinase activity. Its function is as follows. May play a role in signal transduction pathways that involve calcium as a second messenger. Functions in signal transduction pathways that positively regulate responses to drought, osmotic, and dehydration stress. Regulates expression of stress-associated genes in response to drought. Involved in tolerance to drought stress by increasing proline and soluble sugars, and improving stomatal closure. Required for pollen maturation and spikelet fertility. The chain is Calcium-dependent protein kinase 9 from Oryza sativa subsp. japonica (Rice).